The sequence spans 702 residues: Elongation factor G (702 aa).

Positions Glu8–Ser196 constitute a tr-type G domain. GTP is bound by residues Ala17–Thr24, Asp88–His92, and Asn142–Asp145.

It belongs to the TRAFAC class translation factor GTPase superfamily. Classic translation factor GTPase family. EF-G/EF-2 subfamily.

Its subcellular location is the cytoplasm. Its function is as follows. Catalyzes the GTP-dependent ribosomal translocation step during translation elongation. During this step, the ribosome changes from the pre-translocational (PRE) to the post-translocational (POST) state as the newly formed A-site-bound peptidyl-tRNA and P-site-bound deacylated tRNA move to the P and E sites, respectively. Catalyzes the coordinated movement of the two tRNA molecules, the mRNA and conformational changes in the ribosome. This is Elongation factor G (fusA) from Thiomonas delicata (Thiomonas cuprina).